A 496-amino-acid chain; its full sequence is Probable CtpA-like serine protease (496 aa).

The tract at residues Met-1–Ser-26 is disordered. Residues Asn-10–Glu-25 are compositionally biased toward basic and acidic residues. Residues Phe-39–Ile-59 form a helical membrane-spanning segment. The PDZ domain maps to Thr-124–Gly-206. Active-site charge relay system residues include Ser-329, Asp-340, and Lys-354.

It belongs to the peptidase S41A family.

The protein resides in the cell membrane. The polypeptide is Probable CtpA-like serine protease (Staphylococcus haemolyticus (strain JCSC1435)).